We begin with the raw amino-acid sequence, 360 residues long: Peptide chain release factor 1 (360 aa).

An N5-methylglutamine modification is found at glutamine 236.

This sequence belongs to the prokaryotic/mitochondrial release factor family. In terms of processing, methylated by PrmC. Methylation increases the termination efficiency of RF1.

The protein localises to the cytoplasm. Its function is as follows. Peptide chain release factor 1 directs the termination of translation in response to the peptide chain termination codons UAG and UAA. This chain is Peptide chain release factor 1, found in Limosilactobacillus fermentum (strain NBRC 3956 / LMG 18251) (Lactobacillus fermentum).